The primary structure comprises 280 residues: MLEITLLGTGSPIPDPDRAGPSTLVRAGAQAFLVDCGRGVLQRAAAVGVGAAGLSAVLLTHLHSDHIAELGDVLITSWVTNFAADPAPLPIIGPPGTAEVVEATLKAFGHDIGYRIAHHADLTTPPPIEVHEYTAGPAWDRDGVTIRVAPTDHRPVTPTIGFRIESDGASVVLAGDTVPCDSLDQLAAGADALVHTVIRKDIVTQIPQQRVKDICDYHSSVREAAATANRAGVGTLVMTHYVPAIGPGQEEQWRALAATEFSGRIEVGNDLHRVEVHPRR.

Residues histidine 61, histidine 63, aspartate 65, histidine 66, histidine 153, aspartate 176, and histidine 240 each coordinate Zn(2+). Aspartate 65 acts as the Proton acceptor in catalysis.

This sequence belongs to the RNase Z family. In terms of assembly, homodimer. It depends on Zn(2+) as a cofactor.

It catalyses the reaction Endonucleolytic cleavage of RNA, removing extra 3' nucleotides from tRNA precursor, generating 3' termini of tRNAs. A 3'-hydroxy group is left at the tRNA terminus and a 5'-phosphoryl group is left at the trailer molecule.. Functionally, zinc phosphodiesterase, which displays some tRNA 3'-processing endonuclease activity. Probably involved in tRNA maturation, by removing a 3'-trailer from precursor tRNA. The sequence is that of Ribonuclease Z from Mycobacterium bovis (strain BCG / Pasteur 1173P2).